Reading from the N-terminus, the 690-residue chain is Methionine--tRNA ligase (690 aa).

The 'HIGH' region motif lies at 13–23 (PYANGQIHIGH). Cysteine 144, cysteine 147, cysteine 157, and cysteine 160 together coordinate Zn(2+). The 'KMSKS' region signature appears at 335 to 339 (KMSKS). Lysine 338 contacts ATP. The 107-residue stretch at 584–690 (DFAKIDLRVA…SGAVPGMRIR (107 aa)) folds into the tRNA-binding domain.

The protein belongs to the class-I aminoacyl-tRNA synthetase family. MetG type 1 subfamily. As to quaternary structure, homodimer. Requires Zn(2+) as cofactor.

It localises to the cytoplasm. The enzyme catalyses tRNA(Met) + L-methionine + ATP = L-methionyl-tRNA(Met) + AMP + diphosphate. Its function is as follows. Is required not only for elongation of protein synthesis but also for the initiation of all mRNA translation through initiator tRNA(fMet) aminoacylation. This Cupriavidus metallidurans (strain ATCC 43123 / DSM 2839 / NBRC 102507 / CH34) (Ralstonia metallidurans) protein is Methionine--tRNA ligase.